Here is a 238-residue protein sequence, read N- to C-terminus: Ribose-5-phosphate isomerase A (238 aa).

Substrate is bound by residues 30 to 33 (SGST), 87 to 90 (DGAD), and 100 to 103 (KGGG). Catalysis depends on Glu-109, which acts as the Proton acceptor. Lys-127 is a substrate binding site.

It belongs to the ribose 5-phosphate isomerase family. As to quaternary structure, homodimer.

The catalysed reaction is aldehydo-D-ribose 5-phosphate = D-ribulose 5-phosphate. It functions in the pathway carbohydrate degradation; pentose phosphate pathway; D-ribose 5-phosphate from D-ribulose 5-phosphate (non-oxidative stage): step 1/1. Functionally, catalyzes the reversible conversion of ribose-5-phosphate to ribulose 5-phosphate. In Prochlorococcus marinus (strain MIT 9303), this protein is Ribose-5-phosphate isomerase A.